The primary structure comprises 122 residues: NLFQFTKMINGKLGAFAVLNYISTGCYCGWGGQGTPKDATDRCCFVHDCCYGRVKGCNPKLAIYSYSFQKGNIVCGKNNGCLRDICECDRVAANCFHQNKNTYNRNYRFLSSSRCRQTSEQC.

7 cysteine pairs are disulfide-bonded: Cys-26/Cys-115, Cys-28/Cys-44, Cys-43/Cys-95, Cys-49/Cys-122, Cys-50/Cys-88, Cys-57/Cys-81, and Cys-75/Cys-86. Ca(2+) contacts are provided by Tyr-27, Gly-29, and Gly-31. Residue His-47 is part of the active site. A Ca(2+)-binding site is contributed by Asp-48. Asp-89 is a catalytic residue.

It belongs to the phospholipase A2 family. Group I subfamily. D49 sub-subfamily. As to quaternary structure, heterodimer of an acidic subunit (CbIalpha or CbIbeta) and a basic subunit (CbII). The acidic subunit is non-toxic, and increases the toxicity of the basic subunit. Ca(2+) is required as a cofactor. Expressed by the venom gland.

It localises to the secreted. The enzyme catalyses a 1,2-diacyl-sn-glycero-3-phosphocholine + H2O = a 1-acyl-sn-glycero-3-phosphocholine + a fatty acid + H(+). Heterodimer: presynaptic neurotoxin. In terms of biological role, monomer: Snake venom phospholipase A2 (PLA2) that exhibits strong anticoagulant effects by binding to factor Xa (F10) and inhibiting the prothrombinase activity (IC(50) is 20 nM). PLA2 catalyzes the calcium-dependent hydrolysis of the 2-acyl groups in 3-sn-phosphoglycerides. The chain is Basic phospholipase A2 CbII from Pseudocerastes fieldi (Field's horned viper).